Consider the following 741-residue polypeptide: Catalase-peroxidase 2 (741 aa).

The signal sequence occupies residues methionine 1–alanine 27. The tryptophyl-tyrosyl-methioninium (Trp-Tyr) (with M-255) cross-link spans tryptophan 106–tyrosine 229. Histidine 107 acts as the Proton acceptor in catalysis. Positions tyrosine 229–methionine 255 form a cross-link, tryptophyl-tyrosyl-methioninium (Tyr-Met) (with W-106). Histidine 270 provides a ligand contact to heme b.

This sequence belongs to the peroxidase family. Peroxidase/catalase subfamily. As to quaternary structure, homodimer or homotetramer. The cofactor is heme b. Formation of the three residue Trp-Tyr-Met cross-link is important for the catalase, but not the peroxidase activity of the enzyme.

The enzyme catalyses H2O2 + AH2 = A + 2 H2O. It catalyses the reaction 2 H2O2 = O2 + 2 H2O. Its function is as follows. Bifunctional enzyme with both catalase and broad-spectrum peroxidase activity. The polypeptide is Catalase-peroxidase 2 (Shewanella oneidensis (strain ATCC 700550 / JCM 31522 / CIP 106686 / LMG 19005 / NCIMB 14063 / MR-1)).